The primary structure comprises 475 residues: Glycogen synthase (475 aa).

An ADP-alpha-D-glucose-binding site is contributed by Lys15.

The protein belongs to the glycosyltransferase 1 family. Bacterial/plant glycogen synthase subfamily.

It carries out the reaction [(1-&gt;4)-alpha-D-glucosyl](n) + ADP-alpha-D-glucose = [(1-&gt;4)-alpha-D-glucosyl](n+1) + ADP + H(+). Its pathway is glycan biosynthesis; glycogen biosynthesis. In terms of biological role, synthesizes alpha-1,4-glucan chains using ADP-glucose. This Chlamydia felis (strain Fe/C-56) (Chlamydophila felis) protein is Glycogen synthase.